An 828-amino-acid chain; its full sequence is Glycerol-3-phosphate acyltransferase (828 aa).

An HXXXXD motif motif is present at residues 309-314 (CHRSHI).

This sequence belongs to the GPAT/DAPAT family.

The protein localises to the cell inner membrane. The enzyme catalyses sn-glycerol 3-phosphate + an acyl-CoA = a 1-acyl-sn-glycero-3-phosphate + CoA. It participates in phospholipid metabolism; CDP-diacylglycerol biosynthesis; CDP-diacylglycerol from sn-glycerol 3-phosphate: step 1/3. In Pseudomonas entomophila (strain L48), this protein is Glycerol-3-phosphate acyltransferase.